The primary structure comprises 1154 residues: Voltage-gated inwardly rectifying potassium channel KCNH2 (1154 aa).

The Cytoplasmic portion of the chain corresponds to 1 to 403; it reads MPVRRGHVAP…RIHRWTILHY (403 aa). One can recognise a PAS domain in the interval 41–70; the sequence is VIYCNDGFCELCGYSRAEVMQRPCTCDFLH. The region spanning 92-144 is the PAC domain; the sequence is RKVEIAFYRKDGSCFLCLVDVVPVKNEDGAVIMFILNFEVVMEKDMVGSPARD. The tract at residues 233-312 is disordered; it reads ALVGSGSPPA…ASTGAMHPLR (80 aa). Phosphoserine is present on Ser239. Over residues 258-269 the composition is skewed to polar residues; sequence PDGSGSSCSLAR. 4 positions are modified to phosphoserine: Ser283, Ser284, Ser320, and Ser351. A helical transmembrane segment spans residues 404-424; sequence SPFKAVWDWLILLLVIYTAVF. The Extracellular segment spans residues 425–450; the sequence is TPYSAAFLLKETEEGSQAPDCGYACQ. Residues 451–471 traverse the membrane as a helical segment; sequence PLAVVDLIVDIMFIVDILINF. Over 472-495 the chain is Cytoplasmic; that stretch reads RTTYVNANEEVVSHPGRIAVHYFK. The helical transmembrane segment at 496 to 516 threads the bilayer; it reads GWFLIDMVAAIPFDLLIFGSG. The Extracellular portion of the chain corresponds to 517–520; the sequence is SEEL. Residues 521–541 form a helical; Voltage-sensor membrane-spanning segment; that stretch reads IGLLKTARLLRLVRVARKLDR. The Cytoplasmic portion of the chain corresponds to 542–547; that stretch reads YSEYGA. Residues 548–568 traverse the membrane as a helical segment; the sequence is AVLFLLMCTFALIAHWLACIW. The Extracellular portion of the chain corresponds to 569–611; sequence YAIGNMEQPNMDSHIGWLHNLGDQIGKPYNSSGLGGPSIKDKY. The segment at residues 612–632 is an intramembrane region (pore-forming); the sequence is VTALYFTFSSLTSVGFGNVSP. The short motif at 624–629 is the Selectivity filter element; that stretch reads SVGFGN. The Extracellular portion of the chain corresponds to 633 to 638; that stretch reads NTNSEK. Residues 639 to 659 form a helical membrane-spanning segment; it reads IFSICVMLIGSLMYASIFGNV. Residues 660–1154 are Cytoplasmic-facing; it reads SAIIQRLYSG…LHRHGSDPGS (495 aa). Residues 742–842 are cNMP-binding domain; that stretch reads PFRGATKGCL…IHRDDLLEVL (101 aa). The segment at 870–985 is disordered; sequence GSPGSTELEG…DVEKSSDTCN (116 aa). Ser871 and Ser874 each carry phosphoserine. Residues 883–892 show a composition bias toward basic residues; the sequence is RQRKRKLSFR. Residues 916–927 show a composition bias toward gly residues; the sequence is GPSGRGQQGGPW. Residues 928 to 939 are compositionally biased toward low complexity; sequence GESLSSGPSSPE. Arg1014 is subject to Omega-N-methylarginine. A coiled-coil region spans residues 1037-1064; sequence RGDVESRLDALQRQLNRLETRLSADMAT. The interval 1125–1154 is disordered; that stretch reads DGPARRLSLPGQLGALTSQPLHRHGSDPGS. At Ser1132 the chain carries Phosphoserine.

It belongs to the potassium channel family. H (Eag) (TC 1.A.1.20) subfamily. Kv11.1/KCNH2 sub-subfamily. The potassium channel is probably composed of a homo- or heterotetrameric complex of pore-forming alpha subunits that can associate with modulating beta subunits. Interacts with DNAJB12 and DNAJB14; chaperones DNAJB12 and DNAJB14 promote tetramerization. Heteromultimer with KCNH6/ERG2 and KCNH7/ERG3. Interacts with ALG10B. Forms a stable complex with KCNE1 or KCNE2, and that this heteromultimerization regulates Inward rectifier potassium channel activity. Interacts with CANX. The core-glycosylated, but not the fully glycosylated form interacts with RNF207. Interacts with NDFIP1 and NDFIP2; this interaction decreases the cell membrane expression by targeting KCNH2, through interaction with NEDD4L, for the degradation through the multivesicular bodies (MVBs)-lysosomal pathway. In terms of processing, phosphorylated on serine and threonine residues. Phosphorylation by PKA inhibits ion conduction.

It is found in the cell membrane. It catalyses the reaction K(+)(in) = K(+)(out). Its function is as follows. Pore-forming (alpha) subunit of voltage-gated inwardly rectifying potassium channel. Characterized by unusual gating kinetics by producing relatively small outward currents during membrane depolarization and large inward currents during subsequent repolarization which reflect a rapid inactivation during depolarization and quick recovery from inactivation but slow deactivation (closing) during repolarization. Channel properties are modulated by cAMP and subunit assembly. Forms a stable complex with KCNE1 or KCNE2, and that this heteromultimerization regulates inward rectifier potassium channel activity. In Sus scrofa (Pig), this protein is Voltage-gated inwardly rectifying potassium channel KCNH2.